The following is a 300-amino-acid chain: Glutamyl-Q tRNA(Asp) synthetase (300 aa).

L-glutamate is bound by residues 8–12 (RFAPS) and E44. Positions 11 to 21 (PSPTGALHAGS) match the 'HIGH' region motif. Residues C100, C102, Y126, and C130 each contribute to the Zn(2+) site. Positions 190 and 208 each coordinate L-glutamate. The short motif at 246 to 250 (KLSKQ) is the 'KMSKS' region element. K249 lines the ATP pocket.

The protein belongs to the class-I aminoacyl-tRNA synthetase family. GluQ subfamily. Zn(2+) serves as cofactor.

Functionally, catalyzes the tRNA-independent activation of glutamate in presence of ATP and the subsequent transfer of glutamate onto a tRNA(Asp). Glutamate is transferred on the 2-amino-5-(4,5-dihydroxy-2-cyclopenten-1-yl) moiety of the queuosine in the wobble position of the QUC anticodon. This Leptothrix cholodnii (strain ATCC 51168 / LMG 8142 / SP-6) (Leptothrix discophora (strain SP-6)) protein is Glutamyl-Q tRNA(Asp) synthetase.